The following is a 510-amino-acid chain: NAD(P)H-quinone oxidoreductase subunit 2 A, chloroplastic (510 aa).

A run of 13 helical transmembrane segments spans residues 26–46, 57–77, 99–119, 124–144, 149–169, 183–203, 227–247, 295–315, 323–343, 354–374, 395–415, 418–438, and 482–502; these read LFDG…ILLL, ISWF…ALLF, IFQF…VEYI, MAIT…MFLC, LITI…LSGY, YLLM…WLYG, PGIL…LSPA, WHLL…LIAI, MLAY…IVGD, YMLF…SFGL, ALSL…SGFF, LHLF…IGLL, and LSMI…NPII.

This sequence belongs to the complex I subunit 2 family. In terms of assembly, NDH is composed of at least 16 different subunits, 5 of which are encoded in the nucleus.

Its subcellular location is the plastid. It localises to the chloroplast thylakoid membrane. The catalysed reaction is a plastoquinone + NADH + (n+1) H(+)(in) = a plastoquinol + NAD(+) + n H(+)(out). It carries out the reaction a plastoquinone + NADPH + (n+1) H(+)(in) = a plastoquinol + NADP(+) + n H(+)(out). In terms of biological role, NDH shuttles electrons from NAD(P)H:plastoquinone, via FMN and iron-sulfur (Fe-S) centers, to quinones in the photosynthetic chain and possibly in a chloroplast respiratory chain. The immediate electron acceptor for the enzyme in this species is believed to be plastoquinone. Couples the redox reaction to proton translocation, and thus conserves the redox energy in a proton gradient. The chain is NAD(P)H-quinone oxidoreductase subunit 2 A, chloroplastic from Glycine max (Soybean).